Consider the following 238-residue polypeptide: Demethylmenaquinone methyltransferase (238 aa).

S-adenosyl-L-methionine is bound by residues threonine 60, aspartate 81, and 108-109 (NA).

Belongs to the class I-like SAM-binding methyltransferase superfamily. MenG/UbiE family.

It carries out the reaction a 2-demethylmenaquinol + S-adenosyl-L-methionine = a menaquinol + S-adenosyl-L-homocysteine + H(+). The protein operates within quinol/quinone metabolism; menaquinone biosynthesis; menaquinol from 1,4-dihydroxy-2-naphthoate: step 2/2. Functionally, methyltransferase required for the conversion of demethylmenaquinol (DMKH2) to menaquinol (MKH2). The chain is Demethylmenaquinone methyltransferase from Oceanobacillus iheyensis (strain DSM 14371 / CIP 107618 / JCM 11309 / KCTC 3954 / HTE831).